The following is a 298-amino-acid chain: Probable pyridoxal 5'-phosphate synthase subunit SNZ2 (298 aa).

Asp21 provides a ligand contact to D-ribose 5-phosphate. The active-site Schiff-base intermediate with D-ribose 5-phosphate is Lys78. D-ribose 5-phosphate contacts are provided by residues Gly150, Gly213, and 234–235; that span reads GS.

It belongs to the PdxS/SNZ family. As to quaternary structure, homohexamer. Interacts with THI11.

It carries out the reaction aldehydo-D-ribose 5-phosphate + D-glyceraldehyde 3-phosphate + L-glutamine = pyridoxal 5'-phosphate + L-glutamate + phosphate + 3 H2O + H(+). It participates in cofactor biosynthesis; pyridoxal 5'-phosphate biosynthesis. In terms of biological role, catalyzes the formation of pyridoxal 5'-phosphate from ribose 5-phosphate (RBP), glyceraldehyde 3-phosphate (G3P) and ammonia. The ammonia is provided by a SNO isoform. Can also use ribulose 5-phosphate and dihydroxyacetone phosphate as substrates, resulting from enzyme-catalyzed isomerization of RBP and G3P, respectively. This is Probable pyridoxal 5'-phosphate synthase subunit SNZ2 (SNZ2) from Saccharomyces cerevisiae (strain ATCC 204508 / S288c) (Baker's yeast).